Consider the following 186-residue polypeptide: ATP-dependent protease subunit HslV (186 aa).

Residue Thr14 is part of the active site. Residues Ala168, Cys171, and Thr174 each coordinate Na(+).

The protein belongs to the peptidase T1B family. HslV subfamily. A double ring-shaped homohexamer of HslV is capped on each side by a ring-shaped HslU homohexamer. The assembly of the HslU/HslV complex is dependent on binding of ATP.

It localises to the cytoplasm. It catalyses the reaction ATP-dependent cleavage of peptide bonds with broad specificity.. Allosterically activated by HslU binding. Its function is as follows. Protease subunit of a proteasome-like degradation complex believed to be a general protein degrading machinery. The protein is ATP-dependent protease subunit HslV of Bradyrhizobium sp. (strain ORS 278).